The primary structure comprises 302 residues: MDGGGGMLGAVVCLLLVFAIFPLLLWRRRSDAAHRLPPQPLQDERVLRGGPAPGPAARRMRRRPLSTSADASTSRDRDVDDADSDLEEEIQDVPRGSKKKEKKRQDREAQRQAEEAARDSRRTKQDRYAEMRRKKDEEREAQERLMEEEARARKAKEEEAAALEFEKWKGAFSVDAEGTTESDTQDDGQGLLHNFVEYIKNQKCVPLEDLAAEFRMRTQDCINRIITLEGMDRLSGVMDDRGKFIYISTEEMKAVADYIRKQGRVSISHLASNSNQFIDLEPKPQYNEESNLDENAAAGTEL.

Residues 1 to 5 lie on the Lumenal side of the membrane; sequence MDGGG. A helical membrane pass occupies residues 6–26; it reads GMLGAVVCLLLVFAIFPLLLW. Over 27-302 the chain is Cytoplasmic; sequence RRRSDAAHRL…DENAAAGTEL (276 aa). Disordered regions lie at residues 36 to 151 and 279 to 302; these read LPPQ…EEAR and DLEP…GTEL. The segment covering 79–91 has biased composition (acidic residues); sequence VDDADSDLEEEIQ. Residues 103-151 are compositionally biased toward basic and acidic residues; that stretch reads KRQDREAQRQAEEAARDSRRTKQDRYAEMRRKKDEEREAQERLMEEEAR.

This sequence belongs to the DDRGK1 family.

The protein resides in the endoplasmic reticulum membrane. Its function is as follows. Substrate adapter for ufmylation, the covalent attachment of the ubiquitin-like modifier UFM1 to substrate proteins. The protein is DDRGK domain-containing protein 1 of Oryza sativa subsp. japonica (Rice).